The chain runs to 151 residues: Phosphopantetheine adenylyltransferase (151 aa).

Residue threonine 9 coordinates substrate. Residues 9 to 10 (TF) and histidine 17 contribute to the ATP site. Substrate is bound by residues lysine 41, threonine 73, and arginine 87. Residues 88 to 90 (GIR), glutamate 98, and 122 to 128 (LTSISST) contribute to the ATP site.

It belongs to the bacterial CoaD family. As to quaternary structure, homohexamer. The cofactor is Mg(2+).

The protein localises to the cytoplasm. It catalyses the reaction (R)-4'-phosphopantetheine + ATP + H(+) = 3'-dephospho-CoA + diphosphate. It participates in cofactor biosynthesis; coenzyme A biosynthesis; CoA from (R)-pantothenate: step 4/5. In terms of biological role, reversibly transfers an adenylyl group from ATP to 4'-phosphopantetheine, yielding dephospho-CoA (dPCoA) and pyrophosphate. In Phocaeicola vulgatus (strain ATCC 8482 / DSM 1447 / JCM 5826 / CCUG 4940 / NBRC 14291 / NCTC 11154) (Bacteroides vulgatus), this protein is Phosphopantetheine adenylyltransferase.